The sequence spans 173 residues: Galactose-6-phosphate isomerase subunit LacB (173 aa).

This sequence belongs to the LacAB/RpiB family. In terms of assembly, heteromultimeric protein consisting of LacA and LacB.

The enzyme catalyses aldehydo-D-galactose 6-phosphate = keto-D-tagatose 6-phosphate. It functions in the pathway carbohydrate metabolism; D-galactose 6-phosphate degradation; D-tagatose 6-phosphate from D-galactose 6-phosphate: step 1/1. The chain is Galactose-6-phosphate isomerase subunit LacB from Clostridium acetobutylicum (strain ATCC 824 / DSM 792 / JCM 1419 / IAM 19013 / LMG 5710 / NBRC 13948 / NRRL B-527 / VKM B-1787 / 2291 / W).